We begin with the raw amino-acid sequence, 427 residues long: 2-oxoglutarate and iron-dependent oxygenase JMJD4 (427 aa).

The 160-residue stretch at 147 to 306 (SLVNDLEDIF…NMWHFLQQEL (160 aa)) folds into the JmjC domain. Positions 194, 196, and 274 each coordinate Fe cation.

This sequence belongs to the JMJD6 family. As to quaternary structure, interacts with ETF1. Interacts with the ETF1-GSPT1 complex. The cofactor is Fe(2+).

It localises to the cytoplasm. It catalyses the reaction L-lysyl-[protein] + 2-oxoglutarate + O2 = 4-hydroxy-L-lysyl-[protein] + succinate + CO2. In terms of biological role, catalyzes the 2-oxoglutarate and iron-dependent C4-lysyl hydroxylation of ETF1 at 'Lys-63' thereby promoting the translational termination efficiency of ETF1. Not essential for embryonic stem cell (ESC) maintenance and the embryonic and postnatal development. The sequence is that of 2-oxoglutarate and iron-dependent oxygenase JMJD4 (Jmjd4) from Mus musculus (Mouse).